Reading from the N-terminus, the 146-residue chain is 3-dehydroquinate dehydratase (146 aa).

The Proton acceptor role is filled by Tyr-22. Positions 73, 79, and 86 each coordinate substrate. The Proton donor role is filled by His-99. Substrate is bound by residues Leu-100–Ser-101 and Arg-110.

This sequence belongs to the type-II 3-dehydroquinase family. As to quaternary structure, homododecamer.

It carries out the reaction 3-dehydroquinate = 3-dehydroshikimate + H2O. The protein operates within metabolic intermediate biosynthesis; chorismate biosynthesis; chorismate from D-erythrose 4-phosphate and phosphoenolpyruvate: step 3/7. Its function is as follows. Catalyzes a trans-dehydration via an enolate intermediate. The chain is 3-dehydroquinate dehydratase from Synechococcus sp. (strain CC9902).